Reading from the N-terminus, the 202-residue chain is Protein GrpE (202 aa).

The segment covering Met1 to Thr14 has biased composition (polar residues). A disordered region spans residues Met1–Leu58. Residues Arg21–Leu58 are compositionally biased toward low complexity.

This sequence belongs to the GrpE family. Homodimer.

The protein localises to the cytoplasm. Participates actively in the response to hyperosmotic and heat shock by preventing the aggregation of stress-denatured proteins, in association with DnaK and GrpE. It is the nucleotide exchange factor for DnaK and may function as a thermosensor. Unfolded proteins bind initially to DnaJ; upon interaction with the DnaJ-bound protein, DnaK hydrolyzes its bound ATP, resulting in the formation of a stable complex. GrpE releases ADP from DnaK; ATP binding to DnaK triggers the release of the substrate protein, thus completing the reaction cycle. Several rounds of ATP-dependent interactions between DnaJ, DnaK and GrpE are required for fully efficient folding. This chain is Protein GrpE, found in Paraburkholderia phymatum (strain DSM 17167 / CIP 108236 / LMG 21445 / STM815) (Burkholderia phymatum).